A 453-amino-acid polypeptide reads, in one-letter code: Homogentisate 1,2-dioxygenase (453 aa).

Residue histidine 306 is the Proton acceptor of the active site. Fe cation-binding residues include histidine 349 and glutamate 355. Homogentisate-binding residues include tyrosine 364 and histidine 385. Histidine 385 provides a ligand contact to Fe cation.

The protein belongs to the homogentisate dioxygenase family. In terms of assembly, hexamer; dimer of trimers. It depends on Fe cation as a cofactor.

The catalysed reaction is homogentisate + O2 = 4-maleylacetoacetate + H(+). It participates in amino-acid degradation; L-phenylalanine degradation; acetoacetate and fumarate from L-phenylalanine: step 4/6. Functionally, involved in the catabolism of homogentisate (2,5-dihydroxyphenylacetate or 2,5-OH-PhAc), a central intermediate in the degradation of phenylalanine and tyrosine. Catalyzes the oxidative ring cleavage of the aromatic ring of homogentisate to yield maleylacetoacetate. This chain is Homogentisate 1,2-dioxygenase, found in Rhizobium leguminosarum bv. trifolii (strain WSM2304).